The sequence spans 135 residues: Basic phospholipase A2 10 (135 aa).

7 disulfide bridges follow: Cys-28–Cys-87, Cys-42–Cys-134, Cys-44–Cys-60, Cys-59–Cys-115, Cys-66–Cys-108, Cys-76–Cys-101, and Cys-94–Cys-106. Residues Tyr-43, Gly-45, and Gly-47 each coordinate Ca(2+). Residue His-63 is part of the active site. Asp-64 serves as a coordination point for Ca(2+). Residue Asp-109 is part of the active site.

The protein belongs to the phospholipase A2 family. Group I subfamily. D49 sub-subfamily. It depends on Ca(2+) as a cofactor. In terms of tissue distribution, expressed by the venom gland.

It is found in the secreted. The enzyme catalyses a 1,2-diacyl-sn-glycero-3-phosphocholine + H2O = a 1-acyl-sn-glycero-3-phosphocholine + a fatty acid + H(+). Its function is as follows. Snake venom phospholipase A2 (PLA2) that inhibits neuromuscular transmission by blocking acetylcholine release from the nerve termini. PLA2 catalyzes the calcium-dependent hydrolysis of the 2-acyl groups in 3-sn-phosphoglycerides. This Bungarus fasciatus (Banded krait) protein is Basic phospholipase A2 10.